A 361-amino-acid chain; its full sequence is S-adenosylmethionine decarboxylase proenzyme (361 aa).

Catalysis depends on residues glutamate 13 and glutamate 16. Serine 73 serves as the catalytic Schiff-base intermediate with substrate; via pyruvic acid. A Pyruvic acid (Ser); by autocatalysis modification is found at serine 73. Cysteine 87 (proton donor; for catalytic activity) is an active-site residue. Catalysis depends on proton acceptor; for processing activity residues serine 236 and histidine 249.

The protein belongs to the eukaryotic AdoMetDC family. Pyruvate serves as cofactor. Post-translationally, is synthesized initially as an inactive proenzyme. Formation of the active enzyme involves a self-maturation process in which the active site pyruvoyl group is generated from an internal serine residue via an autocatalytic post-translational modification. Two non-identical subunits are generated from the proenzyme in this reaction, and the pyruvate is formed at the N-terminus of the alpha chain, which is derived from the carboxyl end of the proenzyme. The post-translation cleavage follows an unusual pathway, termed non-hydrolytic serinolysis, in which the side chain hydroxyl group of the serine supplies its oxygen atom to form the C-terminus of the beta chain, while the remainder of the serine residue undergoes an oxidative deamination to produce ammonia and the pyruvoyl group blocking the N-terminus of the alpha chain.

The enzyme catalyses S-adenosyl-L-methionine + H(+) = S-adenosyl 3-(methylsulfanyl)propylamine + CO2. The protein operates within amine and polyamine biosynthesis; S-adenosylmethioninamine biosynthesis; S-adenosylmethioninamine from S-adenosyl-L-methionine: step 1/1. This chain is S-adenosylmethionine decarboxylase proenzyme (SAMDC1), found in Nicotiana sylvestris (Wood tobacco).